A 436-amino-acid polypeptide reads, in one-letter code: Histidinol dehydrogenase (436 aa).

Substrate-binding residues include Ser-237, Gln-259, and His-262. Zn(2+)-binding residues include Gln-259 and His-262. Catalysis depends on proton acceptor residues Glu-327 and His-328. Positions 328, 361, 415, and 420 each coordinate substrate. Zn(2+) is bound at residue Asp-361. Position 420 (His-420) interacts with Zn(2+).

This sequence belongs to the histidinol dehydrogenase family. The cofactor is Zn(2+).

It catalyses the reaction L-histidinol + 2 NAD(+) + H2O = L-histidine + 2 NADH + 3 H(+). The protein operates within amino-acid biosynthesis; L-histidine biosynthesis; L-histidine from 5-phospho-alpha-D-ribose 1-diphosphate: step 9/9. Its function is as follows. Catalyzes the sequential NAD-dependent oxidations of L-histidinol to L-histidinaldehyde and then to L-histidine. This chain is Histidinol dehydrogenase, found in Helicobacter hepaticus (strain ATCC 51449 / 3B1).